The sequence spans 374 residues: Putative heme chaperone HemW-like protein (374 aa).

The 231-residue stretch at 1 to 231 folds into the Radical SAM core domain; it reads MKLLGLYINI…EKLLKKSGYK (231 aa).

This sequence belongs to the anaerobic coproporphyrinogen-III oxidase family. HemW subfamily.

It is found in the cytoplasm. Its function is as follows. Might be a heme chaperone; in E.coli heme binds independently of binding to [4Fe-4S] or S-adenosyl-L-methionine. This Buchnera aphidicola subsp. Baizongia pistaciae (strain Bp) protein is Putative heme chaperone HemW-like protein.